The chain runs to 319 residues: MMVLKVEELVTGKKNGNGEAGEFLPEDFRDGEYEAAVTLEKQEDLKTLLAHPVTLGEQQWKSEKQREAELKKKKLEQRSKLENLEDLEIIIQLKKRKKYRKTKVPVVKEPEPEIITEPVDVPTFLKAALENKLPVVEKFLSDKNNPDVCDEYKRTALHRACLEGHLAIVEKLMEAGAQIEFRDMLESTAIHWASRGGNLDVLKLLLNKGAKISARDKLLSTALHVAVRTGHYECAEHLIACEADLNAKDREGDTPLHDAVRLNRYKMIRLLIMYGADLNIKNCAGKTPMDLVLHWQNGTKAIFDSLRENSYKTSRIATF.

Positions 61–89 (KSEKQREAELKKKKLEQRSKLENLEDLEI) form a coiled coil. 5 ANK repeats span residues 152 to 181 (YKRTALHRACLEGHLAIVEKLMEAGAQIEF), 185 to 214 (LESTAIHWASRGGNLDVLKLLLNKGAKISA), 218 to 247 (LLSTALHVAVRTGHYECAEHLIACEADLNA), 251 to 280 (EGDTPLHDAVRLNRYKMIRLLIMYGADLNI), and 284 to 315 (AGKTPMDLVLHWQNGTKAIFDSLRENSYKTSR).

Interacts with YBX1. Interacts with TTN/titin. As to expression, mainly expressed in activated vascular endothelial cells. To a lower extent, also expressed in hepatoma cells.

The protein resides in the nucleus. In terms of biological role, may play an important role in endothelial cell activation. May act as a nuclear transcription factor that negatively regulates the expression of cardiac genes. Induction seems to be correlated with apoptotic cell death in hepatoma cells. This Homo sapiens (Human) protein is Ankyrin repeat domain-containing protein 1 (ANKRD1).